The chain runs to 526 residues: Light-independent protochlorophyllide reductase subunit B (526 aa).

Asp36 is a [4Fe-4S] cluster binding site. Asp284 serves as the catalytic Proton donor. A substrate-binding site is contributed by 419–420 (GL).

Belongs to the ChlB/BchB/BchZ family. As to quaternary structure, protochlorophyllide reductase is composed of three subunits; BchL, BchN and BchB. Forms a heterotetramer of two BchB and two BchN subunits. Requires [4Fe-4S] cluster as cofactor.

The enzyme catalyses chlorophyllide a + oxidized 2[4Fe-4S]-[ferredoxin] + 2 ADP + 2 phosphate = protochlorophyllide a + reduced 2[4Fe-4S]-[ferredoxin] + 2 ATP + 2 H2O. Its pathway is porphyrin-containing compound metabolism; bacteriochlorophyll biosynthesis (light-independent). Its function is as follows. Component of the dark-operative protochlorophyllide reductase (DPOR) that uses Mg-ATP and reduced ferredoxin to reduce ring D of protochlorophyllide (Pchlide) to form chlorophyllide a (Chlide). This reaction is light-independent. The NB-protein (BchN-BchB) is the catalytic component of the complex. In Halorhodospira halophila (strain DSM 244 / SL1) (Ectothiorhodospira halophila (strain DSM 244 / SL1)), this protein is Light-independent protochlorophyllide reductase subunit B.